The primary structure comprises 484 residues: Probable cytosol aminopeptidase (484 aa).

2 residues coordinate Mn(2+): K256 and D261. Residue K268 is part of the active site. Mn(2+)-binding residues include D279, D338, and E340. R342 is an active-site residue.

This sequence belongs to the peptidase M17 family. The cofactor is Mn(2+).

It localises to the cytoplasm. It carries out the reaction Release of an N-terminal amino acid, Xaa-|-Yaa-, in which Xaa is preferably Leu, but may be other amino acids including Pro although not Arg or Lys, and Yaa may be Pro. Amino acid amides and methyl esters are also readily hydrolyzed, but rates on arylamides are exceedingly low.. The enzyme catalyses Release of an N-terminal amino acid, preferentially leucine, but not glutamic or aspartic acids.. In terms of biological role, presumably involved in the processing and regular turnover of intracellular proteins. Catalyzes the removal of unsubstituted N-terminal amino acids from various peptides. The chain is Probable cytosol aminopeptidase from Actinobacillus succinogenes (strain ATCC 55618 / DSM 22257 / CCUG 43843 / 130Z).